We begin with the raw amino-acid sequence, 256 residues long: Enkurin (256 aa).

Residues P83–P89 carry the SH3-binding motif. One can recognise an Enkurin domain in the interval K160–I252. The interaction with TRPC proteins stretch occupies residues K160–N255. The IQ domain occupies I176 to R187.

As to quaternary structure, microtubule inner protein component of sperm flagellar doublet microtubules. Binds calmodulin via its IQ domain. Interacts with TRPC1, TRPC2, TRPC5, but not TRPC3. Interacts with CFAP45. In terms of tissue distribution, expressed in airway epithelial cells.

It is found in the cytoplasm. The protein localises to the cytoskeleton. It localises to the cilium axoneme. Its subcellular location is the flagellum axoneme. Functionally, adapter that functions to localize a calcium-sensitive signal transduction machinery in sperm to a calcium-permeable ion channel. Microtubule inner protein (MIP) part of the dynein-decorated doublet microtubules (DMTs) in cilia axoneme, which is required for motile cilia beating. In Homo sapiens (Human), this protein is Enkurin.